The sequence spans 586 residues: Madf and zinc finger protein 1 (586 aa).

The tract at residues 161-194 (FMSEDDLAPPRKPGRPPRRTRPGQVFKFKVSFIR) is involved in interaction with Cp190. The MADF 1 DNA-binding region spans 201 to 292 (HLIQAYKEHP…KCEFLSVAPV (92 aa)). An involved in interaction with Cp190 region spans residues 294–319 (TPRENEEDNDLTAIKLNFKEENLITT). The segment at residues 320-413 (SFIETYANYP…MCSFLPAKGS (94 aa)) is a DNA-binding region (MADF 2). 6 consecutive C2H2-type zinc fingers follow at residues 418–441 (LYCD…VKAH), 448–471 (YLCS…LRSH), 476–498 (LKCQ…TLIH), 504–527 (HVCD…NGVH), 533–555 (YSCN…IKGH), and 561–583 (KKCE…RRSH).

As to quaternary structure, interacts (via regions flanking MADF domain 1) with Cp190 (via regions between the BTB domain and first zinc finger domain); the interaction is probably direct and is essential for protein function.

Its subcellular location is the nucleus. It is found in the chromosome. It localises to the nucleoplasm. Chromatin-binding protein involved in the organization of active promoters and insulators. Essential for the activity of heterochromatin promoters; primarily binds to specific motifs within promoters of housekeeping genes. May also associate to a lesser extent with promoters in euchromatin. Mediates recruitment of Cp190, a multifunctional protein involved in the recruitment of transcription complexes, the creation of open chromatin regions and the activity of insulators. Cooperates with pita and su(Hw) to recruit Cp190 and regulate insulator function at the front-ultraabdominal (Fub) boundary. May cooperate with other C2H2 zinc finger proteins, such as M1BP, to recruit CP190 to promoters. May be involved in cellular organization and development of the eye. The protein is Madf and zinc finger protein 1 of Drosophila melanogaster (Fruit fly).